The primary structure comprises 263 residues: Adaptin ear-binding coat-associated protein 2 (263 aa).

Disordered regions lie at residues Lys166 to Gly194 and Ala219 to Phe263. The residue at position 181 (Ser181) is a Phosphoserine. 2 consecutive short sequence motifs (WXXF motif) follow at residues Trp240 to Phe243 and Trp260 to Phe263. Residues Ser246–Phe263 show a composition bias toward low complexity.

This sequence belongs to the NECAP family. In terms of assembly, interacts with AP1G1 and AP2A1 components of the adapter protein complexes AP-1 and AP-2. Interacts with the GAE domain proteins GGA1, GGA2 and GGA3.

The protein localises to the cytoplasmic vesicle. The protein resides in the clathrin-coated vesicle membrane. Its subcellular location is the cell membrane. In terms of biological role, involved in endocytosis. The sequence is that of Adaptin ear-binding coat-associated protein 2 (NECAP2) from Homo sapiens (Human).